We begin with the raw amino-acid sequence, 729 residues long: Cytoplasmic polyadenylation element-binding protein 4 (729 aa).

2 disordered regions span residues 20–49 (FPVR…NNNT) and 78–133 (EKAK…KEKI). A compositionally biased stretch (basic residues) spans 24–35 (FHPHLQPPHHHQ). Residues 83–96 (QQQEQQDPLEKQQL) show a composition bias toward low complexity. A phosphoserine mark is found at S97, S99, and S137. A disordered region spans residues 218–328 (FGGSFSPQIG…RGLNGGITPL (111 aa)). The span at 232–249 (HHPHHPHFQHHHSQHQQQ) shows a compositional bias: basic residues. S252 and S255 each carry phosphoserine. Residues 285–300 (WSSYQSPSPTPSSSWS) are compositionally biased toward low complexity. Residues 301 to 313 (PGGGGYGGWGGSQ) show a composition bias toward gly residues. T326 carries the post-translational modification Phosphothreonine. S330 and S332 each carry phosphoserine. RRM domains are found at residues 472 to 563 (RKVF…PWNL) and 580 to 662 (KTIF…PYVL). An RNA-binding region spans residues 541–543 (KLY). 8 residues coordinate Zn(2+): C667, C675, C684, C689, C694, C697, H702, and H710.

The protein belongs to the RRM CPEB family. Interacts with TOB1. As to expression, expressed in pancreas in islets and ductal cells (at protein level). Expressed in melanocytes.

Its subcellular location is the cytoplasm. The protein localises to the cell projection. It localises to the dendrite. It is found in the dendritic spine. The protein resides in the postsynaptic density. Its subcellular location is the axon. The protein localises to the growth cone. It localises to the endoplasmic reticulum. It is found in the perinuclear region. Its function is as follows. Sequence-specific RNA-binding protein that binds to the cytoplasmic polyadenylation element (CPE), an uridine-rich sequence element (consensus sequence 5'-UUUUUAU-3') within the mRNA 3'-UTR. RNA binding results in a clear conformational change analogous to the Venus fly trap mechanism. Regulates activation of unfolded protein response (UPR) in the process of adaptation to ER stress in liver, by maintaining translation of CPE-regulated mRNAs in conditions in which global protein synthesis is inhibited. Required for cell cycle progression, specifically for cytokinesis and chromosomal segregation. Plays a role as an oncogene promoting tumor growth and progression by positively regulating translation of t-plasminogen activator/PLAT. Stimulates proliferation of melanocytes. In contrast to CPEB1 and CPEB3, does not play role in synaptic plasticity, learning and memory. This is Cytoplasmic polyadenylation element-binding protein 4 (CPEB4) from Homo sapiens (Human).